The primary structure comprises 106 residues: Protein translation factor SUI1 homolog (106 aa).

The protein belongs to the SUI1 family.

Functionally, additional factor that functions in concert with eIF-2 and the initiator tRNA in directing the ribosome to the proper start site of translation. This Acanthamoeba polyphaga mimivirus (APMV) protein is Protein translation factor SUI1 homolog.